Consider the following 398-residue polypeptide: Dual-specificity RNA methyltransferase RlmN (398 aa).

The Proton acceptor role is filled by E119. Residues 125-364 (EADRATLCVS…TIVRKTRGDD (240 aa)) enclose the Radical SAM core domain. C132 and C369 are oxidised to a cystine. [4Fe-4S] cluster is bound by residues C139, C143, and C146. Residues 193-194 (GE), S225, 247-249 (SLH), and N326 contribute to the S-adenosyl-L-methionine site. C369 (S-methylcysteine intermediate) is an active-site residue.

The protein belongs to the radical SAM superfamily. RlmN family. Requires [4Fe-4S] cluster as cofactor.

It localises to the cytoplasm. The enzyme catalyses adenosine(2503) in 23S rRNA + 2 reduced [2Fe-2S]-[ferredoxin] + 2 S-adenosyl-L-methionine = 2-methyladenosine(2503) in 23S rRNA + 5'-deoxyadenosine + L-methionine + 2 oxidized [2Fe-2S]-[ferredoxin] + S-adenosyl-L-homocysteine. It catalyses the reaction adenosine(37) in tRNA + 2 reduced [2Fe-2S]-[ferredoxin] + 2 S-adenosyl-L-methionine = 2-methyladenosine(37) in tRNA + 5'-deoxyadenosine + L-methionine + 2 oxidized [2Fe-2S]-[ferredoxin] + S-adenosyl-L-homocysteine. In terms of biological role, specifically methylates position 2 of adenine 2503 in 23S rRNA and position 2 of adenine 37 in tRNAs. m2A2503 modification seems to play a crucial role in the proofreading step occurring at the peptidyl transferase center and thus would serve to optimize ribosomal fidelity. The chain is Dual-specificity RNA methyltransferase RlmN from Yersinia pseudotuberculosis serotype O:3 (strain YPIII).